The chain runs to 662 residues: Transforming growth factor beta activator LRRC32 (662 aa).

The signal sequence occupies residues 1-17 (MRPQILLLLALLTLGLA). Residues 18-625 (AQRQDKVPCK…EDCEKGGLKN (608 aa)) are Extracellular-facing. The region spanning 21 to 48 (QDKVPCKMVDKKVSCQGLGLLQVPSVLP) is the LRRNT domain. 10 LRR repeats span residues 50-73 (DTET…GFYT), 74-95 (ALRH…AFQA), 98-119 (HLEH…SAGG), 125-145 (RVTS…ERLL), 150-171 (SLHT…TFRD), 174-195 (VLEQ…AFEG), 198-219 (RLTH…SLQQ), 220-240 (LRVL…SQPQ), 244-265 (QLTW…AALP), and 266-286 (RLIY…PPQD). The N-linked (GlcNAc...) asparagine glycan is linked to N203. N271 and N308 each carry an N-linked (GlcNAc...) asparagine glycan. 10 LRR repeats span residues 316 to 339 (QLLN…EHLT), 340 to 361 (SLCF…RSGS), 364 to 385 (CLML…ARAL), 387 to 408 (SLRT…TFAN), 411 to 432 (SLQR…DEPG), 444 to 465 (SLHS…AFLH), 467 to 488 (PLTE…ALGG), 492 to 513 (SLEV…LPCF), 515 to 536 (CLKR…TQAV), and 537 to 558 (SLEV…AMGG). An N-linked (GlcNAc...) asparagine glycan is attached at N345. An N-linked (GlcNAc...) asparagine glycan is attached at N545. The LRRCT domain maps to 571–620 (NPLSCCGNGWLAAQLHQGRVDVDATQDLICRFSSQEEVSLSHVRPEDCEK). The chain crosses the membrane as a helical span at residues 626-646 (INLIIILTFILVSAILLTTLA). Residues 647–662 (TCCCVRRQKFNQQYKA) lie on the Cytoplasmic side of the membrane.

The protein belongs to the LRRC32/LRRC33 family. As to quaternary structure, interacts with TGFB1; associates via disulfide bonds with the Latency-associated peptide chain (LAP) regulatory chain of TGFB1, leading to regulate activation of TGF-beta-1. Interacts with TGFB2. Interacts with TGFB3; associates via disulfide bonds with the Latency-associated peptide chain (LAP) regulatory chain of TGFB3, leading to regulate activation of TGF-beta-3. Interacts with LAPTM4B; decreases TGFB1 production in regulatory T-cells.

It is found in the cell membrane. It localises to the cell surface. Functionally, key regulator of transforming growth factor beta (TGFB1, TGFB2 and TGFB3) that controls TGF-beta activation by maintaining it in a latent state during storage in extracellular space. Associates specifically via disulfide bonds with the Latency-associated peptide (LAP), which is the regulatory chain of TGF-beta, and regulates integrin-dependent activation of TGF-beta. Able to outcompete LTBP1 for binding to LAP regulatory chain of TGF-beta. Controls activation of TGF-beta-1 (TGFB1) on the surface of activated regulatory T-cells (Tregs). Required for epithelial fusion during palate development by regulating activation of TGF-beta-3 (TGFB3). The chain is Transforming growth factor beta activator LRRC32 from Pongo abelii (Sumatran orangutan).